Here is a 475-residue protein sequence, read N- to C-terminus: Ribulose bisphosphate carboxylase large chain (475 aa).

Positions 1-2 (MS) are excised as a propeptide. The residue at position 3 (Pro-3) is an N-acetylproline. N6,N6,N6-trimethyllysine is present on Lys-14. Substrate is bound by residues Asn-123 and Thr-173. Lys-175 functions as the Proton acceptor in the catalytic mechanism. Residue Lys-177 participates in substrate binding. Residues Lys-201, Asp-203, and Glu-204 each coordinate Mg(2+). An N6-carboxylysine modification is found at Lys-201. His-294 (proton acceptor) is an active-site residue. Positions 295, 327, and 379 each coordinate substrate.

The protein belongs to the RuBisCO large chain family. Type I subfamily. As to quaternary structure, heterohexadecamer of 8 large chains and 8 small chains; disulfide-linked. The disulfide link is formed within the large subunit homodimers. Requires Mg(2+) as cofactor. The disulfide bond which can form in the large chain dimeric partners within the hexadecamer appears to be associated with oxidative stress and protein turnover.

It localises to the plastid. The protein resides in the chloroplast. The catalysed reaction is 2 (2R)-3-phosphoglycerate + 2 H(+) = D-ribulose 1,5-bisphosphate + CO2 + H2O. The enzyme catalyses D-ribulose 1,5-bisphosphate + O2 = 2-phosphoglycolate + (2R)-3-phosphoglycerate + 2 H(+). Its function is as follows. RuBisCO catalyzes two reactions: the carboxylation of D-ribulose 1,5-bisphosphate, the primary event in carbon dioxide fixation, as well as the oxidative fragmentation of the pentose substrate in the photorespiration process. Both reactions occur simultaneously and in competition at the same active site. This Vitis vinifera (Grape) protein is Ribulose bisphosphate carboxylase large chain.